Reading from the N-terminus, the 296-residue chain is Polyamine aminopropyltransferase (296 aa).

In terms of domain architecture, PABS spans 16 to 251 (HLWYFEYYTG…GMWSYTFASK (236 aa)). S-methyl-5'-thioadenosine is bound at residue Q46. Residues H77 and D101 each contribute to the spermidine site. S-methyl-5'-thioadenosine-binding positions include E121 and 152-153 (NG). The active-site Proton acceptor is D170. 170 to 173 (DSTD) contacts spermidine.

It belongs to the spermidine/spermine synthase family. As to quaternary structure, homodimer or homotetramer.

Its subcellular location is the cytoplasm. It carries out the reaction S-adenosyl 3-(methylsulfanyl)propylamine + putrescine = S-methyl-5'-thioadenosine + spermidine + H(+). Its pathway is amine and polyamine biosynthesis; spermidine biosynthesis; spermidine from putrescine: step 1/1. Functionally, catalyzes the irreversible transfer of a propylamine group from the amino donor S-adenosylmethioninamine (decarboxy-AdoMet) to putrescine (1,4-diaminobutane) to yield spermidine. The sequence is that of Polyamine aminopropyltransferase from Thermotoga petrophila (strain ATCC BAA-488 / DSM 13995 / JCM 10881 / RKU-1).